The chain runs to 144 residues: ATP synthase epsilon chain (144 aa).

This sequence belongs to the ATPase epsilon chain family. F-type ATPases have 2 components, CF(1) - the catalytic core - and CF(0) - the membrane proton channel. CF(1) has five subunits: alpha(3), beta(3), gamma(1), delta(1), epsilon(1). CF(0) has three main subunits: a, b and c.

The protein localises to the cell inner membrane. In terms of biological role, produces ATP from ADP in the presence of a proton gradient across the membrane. The sequence is that of ATP synthase epsilon chain from Ectopseudomonas mendocina (strain ymp) (Pseudomonas mendocina).